The primary structure comprises 1015 residues: DNA polymerase catalytic subunit (1015 aa).

The protein belongs to the DNA polymerase type-B family. As to quaternary structure, forms a complex with the major DNA-binding protein BALF2, the DNA polymerase processivity factor BMRF1, and the alkaline exonuclease BGLF5. Interacts with the putative helicase-primase complex composed of BBLF4, BSLF1 and BBLF2/3 proteins; these interactions may coordinate leading and lagging strand DNA synthesis at the replication fork.

The protein localises to the host nucleus. The catalysed reaction is DNA(n) + a 2'-deoxyribonucleoside 5'-triphosphate = DNA(n+1) + diphosphate. In terms of biological role, replicates viral genomic DNA in the late phase of lytic infection, producing long concatemeric DNA. The replication complex is composed of six viral proteins: the DNA polymerase, processivity factor, primase, primase-associated factor, helicase, and ssDNA-binding protein. The chain is DNA polymerase catalytic subunit from Homo sapiens (Human).